The sequence spans 122 residues: MAQSVSATRRISRLRRHTRLRKKLSGTAERPRLVVHRSARHIHVQLVNDLNGTTVAAASSIEADVRGVPGDKKARSVRVGQLIAERAKAAGIDTVVFDRGGYTYGGRIAALADAARENGLSF.

Belongs to the universal ribosomal protein uL18 family. In terms of assembly, part of the 50S ribosomal subunit; part of the 5S rRNA/L5/L18/L25 subcomplex. Contacts the 5S and 23S rRNAs.

Its function is as follows. This is one of the proteins that bind and probably mediate the attachment of the 5S RNA into the large ribosomal subunit, where it forms part of the central protuberance. In Mycobacterium tuberculosis (strain ATCC 25177 / H37Ra), this protein is Large ribosomal subunit protein uL18.